Consider the following 254-residue polypeptide: Large ribosomal subunit protein uL2 (254 aa).

It belongs to the universal ribosomal protein uL2 family.

The sequence is that of Large ribosomal subunit protein uL2 (RPL2) from Eremothecium gossypii (strain ATCC 10895 / CBS 109.51 / FGSC 9923 / NRRL Y-1056) (Yeast).